The following is a 511-amino-acid chain: Glycerol kinase (511 aa).

T11 provides a ligand contact to ADP. T11, S12, and S13 together coordinate ATP. T11 provides a ligand contact to sn-glycerol 3-phosphate. R15 lines the ADP pocket. 4 residues coordinate sn-glycerol 3-phosphate: R81, E82, Y133, and D242. Residues R81, E82, Y133, D242, and Q243 each coordinate glycerol. 2 residues coordinate ADP: T264 and G321. ATP-binding residues include T264, G321, Q325, and G426. Residues G426 and N430 each coordinate ADP.

The protein belongs to the FGGY kinase family.

The catalysed reaction is glycerol + ATP = sn-glycerol 3-phosphate + ADP + H(+). Its pathway is polyol metabolism; glycerol degradation via glycerol kinase pathway; sn-glycerol 3-phosphate from glycerol: step 1/1. Inhibited by fructose 1,6-bisphosphate (FBP). In terms of biological role, key enzyme in the regulation of glycerol uptake and metabolism. Catalyzes the phosphorylation of glycerol to yield sn-glycerol 3-phosphate. The polypeptide is Glycerol kinase (Verminephrobacter eiseniae (strain EF01-2)).